Here is an 876-residue protein sequence, read N- to C-terminus: Leucine--tRNA ligase (876 aa).

The 'HIGH' region motif lies at 43–53; the sequence is PYPSGRIHMGH. The short motif at 632 to 636 is the 'KMSKS' region element; it reads KMSKS. ATP is bound at residue Lys635.

This sequence belongs to the class-I aminoacyl-tRNA synthetase family.

It localises to the cytoplasm. It carries out the reaction tRNA(Leu) + L-leucine + ATP = L-leucyl-tRNA(Leu) + AMP + diphosphate. In Agrobacterium fabrum (strain C58 / ATCC 33970) (Agrobacterium tumefaciens (strain C58)), this protein is Leucine--tRNA ligase.